The following is a 76-amino-acid chain: Mating-type pheromone BBP1(1) (76 aa).

Cysteine methyl ester is present on C73. C73 carries S-farnesyl cysteine lipidation. A propeptide spans 74 to 76 (VVA) (removed in mature form).

The protein resides in the cell membrane. Functionally, activates B-regulated development. The polypeptide is Mating-type pheromone BBP1(1) (BBP1(1)) (Schizophyllum commune (Split gill fungus)).